Here is a 261-residue protein sequence, read N- to C-terminus: Insulin-like growth factor-binding protein-related protein 1 (261 aa).

Residues Met-1–Cys-17 form the signal peptide. The IGFBP N-terminal domain occupies Glu-18–Leu-101. Intrachain disulfides connect Cys-21/Cys-45, Cys-24/Cys-47, Cys-29/Cys-48, Cys-36/Cys-51, Cys-59/Cys-82, Cys-76/Cys-98, Cys-100/Cys-118, and Cys-107/Cys-139. A Kazal-like domain is found at Asn-70–Ser-141. An Ig-like C2-type domain is found at Pro-143–Val-243. An N-linked (GlcNAc...) asparagine glycan is attached at Asn-154. Cysteines 164 and 227 form a disulfide.

Expressed by the venom gland.

It is found in the secreted. The sequence is that of Insulin-like growth factor-binding protein-related protein 1 from Cupiennius salei (American wandering spider).